The following is a 101-amino-acid chain: Protein Tat (101 aa).

The segment at 1–24 (MEPVDPNLEPWNHPGSQPKTACNN) is interaction with human CREBBP. A transactivation region spans residues 1–48 (MEPVDPNLEPWNHPGSQPKTACNNCYCKRCSYHCLVCFQTKGLGISYG). Positions 22, 25, and 27 each coordinate Zn(2+). The cysteine-rich stretch occupies residues 22–37 (CNNCYCKRCSYHCLVC). An N6-acetyllysine; by host PCAF modification is found at Lys28. The Zn(2+) site is built by Cys30, His33, Cys34, and Cys37. Residues 38–48 (FQTKGLGISYG) are core. Residues 47 to 101 (YGRKKRRQRRSAPPSSEDHQNPIPKQPLPQTRGDQTGSEESKKKVESKTETDPFD) are disordered. Positions 49 to 57 (RKKRRQRRS) match the Nuclear localization signal, RNA-binding (TAR), and protein transduction motif. Residues 49 to 86 (RKKRRQRRSAPPSSEDHQNPIPKQPLPQTRGDQTGSEE) form an interaction with the host capping enzyme RNGTT region. Residues Lys50 and Lys51 each carry the N6-acetyllysine; by host EP300 and GCN5L2 modification. 2 positions are modified to asymmetric dimethylarginine; by host PRMT6: Arg52 and Arg53. Residue Lys71 forms a Glycyl lysine isopeptide (Lys-Gly) (interchain with G-Cter in ubiquitin) linkage. The Cell attachment site signature appears at 78 to 80 (RGD). The span at 85–101 (EESKKKVESKTETDPFD) shows a compositional bias: basic and acidic residues.

Belongs to the lentiviruses Tat family. As to quaternary structure, interacts with host CCNT1. Associates with the P-TEFb complex composed at least of Tat, P-TEFb (CDK9 and CCNT1), TAR RNA, RNA Pol II. Recruits the HATs CREBBP, TAF1/TFIID, EP300, PCAF and GCN5L2. Interacts with host KAT5/Tip60; this interaction targets the latter to degradation. Interacts with the host deacetylase SIRT1. Interacts with host capping enzyme RNGTT; this interaction stimulates RNGTT. Binds to host KDR, and to the host integrins ITGAV/ITGB3 and ITGA5/ITGB1. Interacts with host KPNB1/importin beta-1 without previous binding to KPNA1/importin alpha-1. Interacts with EIF2AK2. Interacts with host nucleosome assembly protein NAP1L1; this interaction may be required for the transport of Tat within the nucleus, since the two proteins interact at the nuclear rim. Interacts with host C1QBP/SF2P32; this interaction involves lysine-acetylated Tat. Interacts with the host chemokine receptors CCR2, CCR3 and CXCR4. Interacts with host DPP4/CD26; this interaction may trigger an anti-proliferative effect. Interacts with host LDLR. Interacts with the host extracellular matrix metalloproteinase MMP1. Interacts with host PRMT6; this interaction mediates Tat's methylation. Interacts with, and is ubiquitinated by MDM2/Hdm2. Interacts with host PSMC3 and HTATIP2. Interacts with STAB1; this interaction may overcome SATB1-mediated repression of IL2 and IL2RA (interleukin) in T cells by binding to the same domain than HDAC1. Interacts (when acetylated) with human CDK13, thereby increasing HIV-1 mRNA splicing and promoting the production of the doubly spliced HIV-1 protein Nef. Interacts with host TBP; this interaction modulates the activity of transcriptional pre-initiation complex. Interacts with host RELA. Interacts with host PLSCR1; this interaction negatively regulates Tat transactivation activity by altering its subcellular distribution. In terms of processing, asymmetrical arginine methylation by host PRMT6 seems to diminish the transactivation capacity of Tat and affects the interaction with host CCNT1. Acetylation by EP300, CREBBP, GCN5L2/GCN5 and PCAF regulates the transactivation activity of Tat. EP300-mediated acetylation of Lys-50 promotes dissociation of Tat from the TAR RNA through the competitive binding to PCAF's bromodomain. In addition, the non-acetylated Tat's N-terminus can also interact with PCAF. PCAF-mediated acetylation of Lys-28 enhances Tat's binding to CCNT1. Lys-50 is deacetylated by SIRT1. Post-translationally, polyubiquitination by host MDM2 does not target Tat to degradation, but activates its transactivation function and fosters interaction with CCNT1 and TAR RNA. In terms of processing, phosphorylated by EIF2AK2 on serine and threonine residues adjacent to the basic region important for TAR RNA binding and function. Phosphorylation of Tat by EIF2AK2 is dependent on the prior activation of EIF2AK2 by dsRNA.

The protein resides in the host nucleus. It localises to the host nucleolus. The protein localises to the host cytoplasm. Its subcellular location is the secreted. Its function is as follows. Transcriptional activator that increases RNA Pol II processivity, thereby increasing the level of full-length viral transcripts. Recognizes a hairpin structure at the 5'-LTR of the nascent viral mRNAs referred to as the transactivation responsive RNA element (TAR) and recruits the cyclin T1-CDK9 complex (P-TEFb complex) that will in turn hyperphosphorylate the RNA polymerase II to allow efficient elongation. The CDK9 component of P-TEFb and other Tat-activated kinases hyperphosphorylate the C-terminus of RNA Pol II that becomes stabilized and much more processive. Other factors such as HTATSF1/Tat-SF1, SUPT5H/SPT5, and HTATIP2 are also important for Tat's function. Besides its effect on RNA Pol II processivity, Tat induces chromatin remodeling of proviral genes by recruiting the histone acetyltransferases (HATs) CREBBP, EP300 and PCAF to the chromatin. This also contributes to the increase in proviral transcription rate, especially when the provirus integrates in transcriptionally silent region of the host genome. To ensure maximal activation of the LTR, Tat mediates nuclear translocation of NF-kappa-B by interacting with host RELA. Through its interaction with host TBP, Tat may also modulate transcription initiation. Tat can reactivate a latently infected cell by penetrating in it and transactivating its LTR promoter. In the cytoplasm, Tat is thought to act as a translational activator of HIV-1 mRNAs. In terms of biological role, extracellular circulating Tat can be endocytosed by surrounding uninfected cells via the binding to several surface receptors such as CD26, CXCR4, heparan sulfate proteoglycans (HSPG) or LDLR. Neurons are rarely infected, but they internalize Tat via their LDLR. Through its interaction with nuclear HATs, Tat is potentially able to control the acetylation-dependent cellular gene expression. Modulates the expression of many cellular genes involved in cell survival, proliferation or in coding for cytokines or cytokine receptors. Tat plays a role in T-cell and neurons apoptosis. Tat induced neurotoxicity and apoptosis probably contribute to neuroAIDS. Circulating Tat also acts as a chemokine-like and/or growth factor-like molecule that binds to specific receptors on the surface of the cells, affecting many cellular pathways. In the vascular system, Tat binds to ITGAV/ITGB3 and ITGA5/ITGB1 integrins dimers at the surface of endothelial cells and competes with bFGF for heparin-binding sites, leading to an excess of soluble bFGF. This chain is Protein Tat, found in Human immunodeficiency virus type 1 group M subtype C (isolate 92BR025) (HIV-1).